We begin with the raw amino-acid sequence, 217 residues long: UPF0502 protein Sfri_1696 (217 aa).

It belongs to the UPF0502 family.

This is UPF0502 protein Sfri_1696 from Shewanella frigidimarina (strain NCIMB 400).